The chain runs to 379 residues: Probable homogentisate phytyltransferase 2, chloroplastic (379 aa).

The tract at residues 1-39 is disordered; sequence MASLASPPLPCRAAATASRSGRPAPRLLGPPPPPASPLL. The N-terminal 65 residues, 1-65, are a transit peptide targeting the chloroplast; the sequence is MASLASPPLP…WSRRDAVRVC (65 aa). 8 consecutive transmembrane segments (helical) span residues 121 to 141, 174 to 194, 195 to 215, 220 to 240, 252 to 272, 299 to 319, 328 to 348, and 361 to 378; these read WLVFKAFYGLVALICGNGYIV, LVVLFAAAGFSIVVTNFGPFI, TSLYCLGLFLGTIYSVPPFRL, VAAFLIIATVRGFLLNFGVYY, WSSPVAFITCFVTLFALVIAI, IAFLGSGLLIANYVAAIAVAF, TVMVPVHAALAVGIIFQTWVL, and YYRFIWNLFYAEYIFFPL.

Belongs to the UbiA prenyltransferase family.

It localises to the plastid. The protein localises to the chloroplast thylakoid membrane. It carries out the reaction phytyl diphosphate + homogentisate + H(+) = 2-methyl-6-phytyl-1,4-benzene-1,4-diol + CO2 + diphosphate. It participates in cofactor biosynthesis; tocopherol biosynthesis. In terms of biological role, involved in the synthesis of tocopherol (vitamin E). Catalyzes the condensation of homogentisate and phytyl diphosphate to form dimethylphytylhydrquinone. This is Probable homogentisate phytyltransferase 2, chloroplastic (HPT2) from Oryza sativa subsp. japonica (Rice).